A 1902-amino-acid chain; its full sequence is PI-type proteinase (1902 aa).

The N-terminal stretch at 1–33 is a signal peptide; that stretch reads MQRKKKGLSILLAGTVALGALAVLPVGEIQAKA. The propeptide occupies 34–187; that stretch reads AISQQTKGSS…VTLAKVYYPT (154 aa). The 507-residue stretch at 191–697 folds into the Peptidase S8 domain; sequence ANSMANVQAV…AGLVDVKAAI (507 aa). Active-site charge relay system residues include Asp-217, His-281, and Ser-620. Residues 1796-1874 are disordered; that stretch reads GKGDGTTGTS…GALPKTGETT (79 aa). Positions 1797 to 1812 are enriched in gly residues; sequence KGDGTTGTSDKGGGQG. Residues 1830–1843 are compositionally biased toward polar residues; the sequence is SQPSSGGNIPTNPA. An LPXTG sorting signal motif is present at residues 1867–1871; the sequence is LPKTG. Thr-1870 carries the post-translational modification Pentaglycyl murein peptidoglycan amidated threonine. A propeptide spans 1871–1902 (removed by sortase); it reads GETTERPAFGFLGVIVVILMGVLGLKRKQREE.

Belongs to the peptidase S8 family.

The protein localises to the secreted. It is found in the cell wall. The catalysed reaction is Endopeptidase activity with very broad specificity, although some subsite preference have been noted, e.g. large hydrophobic residues in the P1 and P4 positions, and Pro in the P2 position. Best known for its action on caseins, although it has been shown to hydrolyze hemoglobin and oxidized insulin B-chain.. Protease which breaks down milk proteins during the growth of the bacteria on milk. The sequence is that of PI-type proteinase (prtP) from Lactococcus lactis subsp. cremoris (Streptococcus cremoris).